The chain runs to 372 residues: Queuine tRNA-ribosyltransferase (372 aa).

Asp-92 serves as the catalytic Proton acceptor. Residues 92–96 (DSGGY), Asp-146, Gln-188, and Gly-215 contribute to the substrate site. The RNA binding stretch occupies residues 246 to 252 (GIGSLKE). Catalysis depends on Asp-265, which acts as the Nucleophile. Residues 270–274 (TRLGR) form an RNA binding; important for wobble base 34 recognition region. Zn(2+)-binding residues include Cys-303, Cys-305, Cys-308, and His-334.

Belongs to the queuine tRNA-ribosyltransferase family. As to quaternary structure, homodimer. Within each dimer, one monomer is responsible for RNA recognition and catalysis, while the other monomer binds to the replacement base PreQ1. Requires Zn(2+) as cofactor.

The catalysed reaction is 7-aminomethyl-7-carbaguanine + guanosine(34) in tRNA = 7-aminomethyl-7-carbaguanosine(34) in tRNA + guanine. It functions in the pathway tRNA modification; tRNA-queuosine biosynthesis. Its function is as follows. Catalyzes the base-exchange of a guanine (G) residue with the queuine precursor 7-aminomethyl-7-deazaguanine (PreQ1) at position 34 (anticodon wobble position) in tRNAs with GU(N) anticodons (tRNA-Asp, -Asn, -His and -Tyr). Catalysis occurs through a double-displacement mechanism. The nucleophile active site attacks the C1' of nucleotide 34 to detach the guanine base from the RNA, forming a covalent enzyme-RNA intermediate. The proton acceptor active site deprotonates the incoming PreQ1, allowing a nucleophilic attack on the C1' of the ribose to form the product. After dissociation, two additional enzymatic reactions on the tRNA convert PreQ1 to queuine (Q), resulting in the hypermodified nucleoside queuosine (7-(((4,5-cis-dihydroxy-2-cyclopenten-1-yl)amino)methyl)-7-deazaguanosine). This chain is Queuine tRNA-ribosyltransferase, found in Prochlorococcus marinus (strain MIT 9301).